Reading from the N-terminus, the 295-residue chain is GTPase Era (295 aa).

The 168-residue stretch at 3-170 (KSGFVTIVGR…VDLMKTELPE (168 aa)) folds into the Era-type G domain. Positions 11-18 (GRPNVGKS) are G1. Residue 11–18 (GRPNVGKS) participates in GTP binding. The segment at 37-41 (QTTRN) is G2. The tract at residues 58 to 61 (DTPG) is G3. GTP is bound by residues 58–62 (DTPGI) and 120–123 (NKID). Positions 120–123 (NKID) are G4. Positions 149–151 (IAA) are G5. Positions 201–278 (LRDEVPHGIA…NVKIWVKVRK (78 aa)) constitute a KH type-2 domain.

The protein belongs to the TRAFAC class TrmE-Era-EngA-EngB-Septin-like GTPase superfamily. Era GTPase family. Monomer.

It is found in the cytoplasm. It localises to the cell membrane. Functionally, an essential GTPase that binds both GDP and GTP, with rapid nucleotide exchange. Plays a role in 16S rRNA processing and 30S ribosomal subunit biogenesis and possibly also in cell cycle regulation and energy metabolism. The protein is GTPase Era of Clostridium botulinum (strain Eklund 17B / Type B).